The chain runs to 122 residues: Large ribosomal subunit protein bL12 (122 aa).

This sequence belongs to the bacterial ribosomal protein bL12 family. In terms of assembly, homodimer. Part of the ribosomal stalk of the 50S ribosomal subunit. Forms a multimeric L10(L12)X complex, where L10 forms an elongated spine to which 2 to 4 L12 dimers bind in a sequential fashion. Binds GTP-bound translation factors.

Forms part of the ribosomal stalk which helps the ribosome interact with GTP-bound translation factors. Is thus essential for accurate translation. The chain is Large ribosomal subunit protein bL12 from Stenotrophomonas maltophilia (strain R551-3).